Reading from the N-terminus, the 621-residue chain is Laccase-2 (621 aa).

A signal peptide spans 1-23 (MMKSFFSAAALLLGLVAPSAVLA). Positions 24-48 (APSLPGVPREVTRDLLRPVEERQSS) are excised as a propeptide. Residues Cys49 and Cys57 are joined by a disulfide bond. Plastocyanin-like domains follow at residues 78-201 (TRTY…IVVN) and 210-367 (IDLG…LPTN). Residue Asn133 is glycosylated (N-linked (GlcNAc...) asparagine). 4 residues coordinate Cu cation: His138, His140, His183, and His185. 2 disulfides stabilise this stretch: Cys159/Cys586 and Cys343/Cys377. Asn261, Asn276, Asn289, Asn325, and Asn334 each carry an N-linked (GlcNAc...) asparagine glycan. Residues Asn401, Asn421, and Asn441 are each glycosylated (N-linked (GlcNAc...) asparagine). The Plastocyanin-like 3 domain occupies 430-566 (DKPIVDYVIA…GGLSVQYLER (137 aa)). Positions 476, 479, 481, 548, 549, 550, and 554 each coordinate Cu cation. Residues 606–621 (KVKKWVGEHPDWYIKN) constitute a propeptide that is removed on maturation.

Belongs to the multicopper oxidase family. Monomer. Requires Cu cation as cofactor. Post-translationally, proteolytically processed at both its N-terminus and its C-terminus.

The protein resides in the secreted. The catalysed reaction is 4 hydroquinone + O2 = 4 benzosemiquinone + 2 H2O. Its function is as follows. Probably involved in lignin degradation and in the detoxification of lignin-derived products in its natural habitat (herbivorous dung), which is rich in lignin of grasses and straw. Probably involved in melanin synthesis and in perithecia development. The chain is Laccase-2 (LAC2) from Podospora anserina (Pleurage anserina).